We begin with the raw amino-acid sequence, 405 residues long: Succinyl-CoA--L-malate CoA-transferase beta subunit (405 aa).

Aspartate 175 acts as the Nucleophile in catalysis.

This sequence belongs to the CoA-transferase III family. In terms of assembly, forms a large complex composed of six heterodimers (alpha, beta).

It catalyses the reaction succinyl-CoA + (S)-malate = (S)-malyl-CoA + succinate. The enzyme catalyses (3S)-citramalate + succinyl-CoA = (3S)-citramalyl-CoA + succinate. In terms of biological role, involved in the 3-hydroxypropionate cycle used for autotrophic carbon dioxide fixation. Catalyzes the transfer of CoA moiety from succinyl-CoA to L-malate to yield L-malyl-CoA. The chain is Succinyl-CoA--L-malate CoA-transferase beta subunit (smtB) from Chloroflexus aurantiacus (strain ATCC 29366 / DSM 635 / J-10-fl).